A 353-amino-acid chain; its full sequence is Protein pelota homolog (353 aa).

Belongs to the eukaryotic release factor 1 family. Pelota subfamily. Monomer. It depends on a divalent metal cation as a cofactor.

The protein localises to the cytoplasm. Its function is as follows. May function in recognizing stalled ribosomes, interact with stem-loop structures in stalled mRNA molecules, and effect endonucleolytic cleavage of the mRNA. May play a role in the release non-functional ribosomes and degradation of damaged mRNAs. Has endoribonuclease activity. The sequence is that of Protein pelota homolog from Methanothermobacter thermautotrophicus (strain ATCC 29096 / DSM 1053 / JCM 10044 / NBRC 100330 / Delta H) (Methanobacterium thermoautotrophicum).